Here is a 170-residue protein sequence, read N- to C-terminus: CASP-like protein 2D1 (170 aa).

Topologically, residues 1–4 (MLKL) are cytoplasmic. A helical membrane pass occupies residues 5–25 (LDFSLRLSVIPLSVATIWLTV). Topologically, residues 26-47 (TNKQDNSIYGYLKYSDLTGLKY) are extracellular. A helical transmembrane segment spans residues 48 to 68 (MVFISGICASYAFIAAVSTWI). The Cytoplasmic segment spans residues 69 to 83 (RCIVTKTWLFFVSDQ). The helical transmembrane segment at 84–104 (IVAYLMVTSGTAVLEILYLAY) threads the bilayer. The Extracellular portion of the chain corresponds to 105-127 (NGDREVSWSEACTSYGKFCYRMK). The chain crosses the membrane as a helical span at residues 128 to 148 (LAVILHALALSCFIILAVISA). Topologically, residues 149 to 170 (YRAFSIFEPPLVPSKVVEEDRA) are cytoplasmic.

This sequence belongs to the Casparian strip membrane proteins (CASP) family. Homodimer and heterodimers.

The protein localises to the cell membrane. This chain is CASP-like protein 2D1, found in Populus trichocarpa (Western balsam poplar).